Consider the following 89-residue polypeptide: Large ribosomal subunit protein bL27 (89 aa).

A disordered region spans residues 1 to 21 (MAHKKAGGSSRNGRDSESKRL).

It belongs to the bacterial ribosomal protein bL27 family.

This is Large ribosomal subunit protein bL27 from Brucella anthropi (strain ATCC 49188 / DSM 6882 / CCUG 24695 / JCM 21032 / LMG 3331 / NBRC 15819 / NCTC 12168 / Alc 37) (Ochrobactrum anthropi).